The sequence spans 1415 residues: DNA-directed RNA polymerase subunit beta' (1415 aa).

The Zn(2+) site is built by C214, C294, C301, and C304. Residues 1335 to 1351 (QNFVDSQGKPQSQSSFI) are compositionally biased toward polar residues. Residues 1335–1390 (QNFVDSQGKPQSQSSFIDDSMSEFSPVKDKSGSVLDDSDFPPGNFDSDFPADNYDL) are disordered.

This sequence belongs to the RNA polymerase beta' chain family. RpoC2 subfamily. In cyanobacteria the RNAP catalytic core is composed of 2 alpha, 1 beta, 1 beta', 1 gamma and 1 omega subunit. When a sigma factor is associated with the core the holoenzyme is formed, which can initiate transcription. The cofactor is Zn(2+).

It carries out the reaction RNA(n) + a ribonucleoside 5'-triphosphate = RNA(n+1) + diphosphate. DNA-dependent RNA polymerase catalyzes the transcription of DNA into RNA using the four ribonucleoside triphosphates as substrates. This Trichodesmium erythraeum (strain IMS101) protein is DNA-directed RNA polymerase subunit beta'.